Reading from the N-terminus, the 373-residue chain is Queuine tRNA-ribosyltransferase (373 aa).

Aspartate 93 acts as the Proton acceptor in catalysis. Substrate is bound by residues 93 to 97 (DSGGF), aspartate 147, glutamine 191, and glycine 218. The RNA binding stretch occupies residues 249-255 (GVGAPRD). The Nucleophile role is filled by aspartate 268. Residues 273–277 (TRNAR) are RNA binding; important for wobble base 34 recognition. Cysteine 306, cysteine 308, cysteine 311, and histidine 337 together coordinate Zn(2+).

Belongs to the queuine tRNA-ribosyltransferase family. As to quaternary structure, homodimer. Within each dimer, one monomer is responsible for RNA recognition and catalysis, while the other monomer binds to the replacement base PreQ1. Requires Zn(2+) as cofactor.

The catalysed reaction is 7-aminomethyl-7-carbaguanine + guanosine(34) in tRNA = 7-aminomethyl-7-carbaguanosine(34) in tRNA + guanine. It participates in tRNA modification; tRNA-queuosine biosynthesis. Its function is as follows. Catalyzes the base-exchange of a guanine (G) residue with the queuine precursor 7-aminomethyl-7-deazaguanine (PreQ1) at position 34 (anticodon wobble position) in tRNAs with GU(N) anticodons (tRNA-Asp, -Asn, -His and -Tyr). Catalysis occurs through a double-displacement mechanism. The nucleophile active site attacks the C1' of nucleotide 34 to detach the guanine base from the RNA, forming a covalent enzyme-RNA intermediate. The proton acceptor active site deprotonates the incoming PreQ1, allowing a nucleophilic attack on the C1' of the ribose to form the product. After dissociation, two additional enzymatic reactions on the tRNA convert PreQ1 to queuine (Q), resulting in the hypermodified nucleoside queuosine (7-(((4,5-cis-dihydroxy-2-cyclopenten-1-yl)amino)methyl)-7-deazaguanosine). The chain is Queuine tRNA-ribosyltransferase from Solidesulfovibrio magneticus (strain ATCC 700980 / DSM 13731 / RS-1) (Desulfovibrio magneticus).